We begin with the raw amino-acid sequence, 164 residues long: Putative lung carcinoma-associated protein 10 (164 aa).

Positions 1 to 164 (MSSCPVHDCP…TQKPQTTVGQ (164 aa)) are disordered. The span at 23–40 (GSRGALRLRGGAPGSAAG) shows a compositional bias: low complexity. Residues 152 to 164 (MQKTQKPQTTVGQ) show a composition bias toward polar residues.

The polypeptide is Putative lung carcinoma-associated protein 10 (LCA10) (Homo sapiens (Human)).